We begin with the raw amino-acid sequence, 980 residues long: MMDVKSISVRVDGTEIQARAGATILDILNENGIEYPQICHVPEVDPIQTCDTCIVEANGKLVRSCATVAENGMSIDLSGNRVKEAQTEAMDRLLENHLLYCTVCDNNNGNCTLHNTAEMMGIEHQKYPYTPKEDPSCAVDMSHPFYRYDPNQCIACGQCVEVCQNLQVNETLSIDWERERPRVIWDEGVPINESSCVSCGQCVTVCPCNALMEKSMLGQAGFMTGIKEDVMEPMIDLVKNVEPGYGSIFAISEVEAAMRETRTKKTKTVCTFCGVGCSFEVWTKGRDILKIQPVSDAPVNAISTCVKGKFGWDFVNSKERITKPLIRKNGAFVESSWEEALDLVASRLGSIKEQYGKGSVGFISSSKITNEENYVIQKLARQVFETNNVDNCSRYCQSPATDGLFRTVGMGGDAGTIKDIAKAGLVIIVGANPAEGHPVLATRVKRAHKLHGQKLIVADLRKNEMAERSDLFISPKQGTDQVWLMAVTKYMIDQGWHDQAFIDENVNYFEDYKETLKTYTLDYAERITGLSKENIIQIAEMIRDADGTCVLWGMGVTQNTGGSDTSAAISNLLLATGNYRRPGAGAYPLRGHNNVQGACDMGTLPGWLPGYQHITDDKARAKFEEAYGVEIDGKPGLDNIQMLHAIEEGKMKAMYLVGEDMALVDSNANHVHDILSSLDFFVVQDIFLSRTAQYADVVLPATPSLEKDGTFTNTERRVQRLYQALPTLGDAKPDWWIIQEVANRLGANWNYSHPSDIFSEMASLSPLFAKASYEVLEGWNSFLWGSFTGESTPLLYEDGFNFPDKKARFALSDWTEPAAFPEEYDLHINNGRMLEHFHEGNMTNKSKGIQAKVPNVFVEISPELAQERGVCDGSLVRLVSPFGAVKLNALITDRVRKNELYLPMNSTDKESAINFLTGPAADKRTNTPAYKQTKVRMEVLGGCETAPLPKTNPRNKKRHPQNGVEAERKWNRPGYVHLTD.

One can recognise a 2Fe-2S ferredoxin-type domain in the interval 5–81 (KSISVRVDGT…GMSIDLSGNR (77 aa)). Residues C39, C50, C53, and C65 each contribute to the [2Fe-2S] cluster site. The 4Fe-4S His(Cys)3-ligated-type domain occupies 81 to 121 (RVKEAQTEAMDRLLENHLLYCTVCDNNNGNCTLHNTAEMMG). H97, C101, C104, C111, C153, C156, C159, C163, C196, C199, C202, C206, C270, C273, C277, and C305 together coordinate [4Fe-4S] cluster. 2 consecutive 4Fe-4S ferredoxin-type domains span residues 144 to 171 (PFYR…VNET) and 187 to 216 (EGVP…EKSM). The tract at residues 258–980 (MRETRTKKTK…NRPGYVHLTD (723 aa)) is formate dehydrogenase. Residues 263-319 (TKKTKTVCTFCGVGCSFEVWTKGRDILKIQPVSDAPVNAISTCVKGKFGWDFVNSKE) form the 4Fe-4S Mo/W bis-MGD-type domain. Residues 944 to 980 (ETAPLPKTNPRNKKRHPQNGVEAERKWNRPGYVHLTD) are disordered.

In the C-terminal section; belongs to the prokaryotic molybdopterin-containing oxidoreductase family. Requires [2Fe-2S] cluster as cofactor. The cofactor is [4Fe-4S] cluster. It depends on Mo-bis(molybdopterin guanine dinucleotide) as a cofactor.

The enzyme catalyses formate + NAD(+) = CO2 + NADH. This Bacillus subtilis (strain 168) protein is Putative formate dehydrogenase YrhE (yrhE).